Reading from the N-terminus, the 224-residue chain is 7-cyano-7-deazaguanine synthase (224 aa).

9-19 (ISGGMDSTLCA) is an ATP binding site. Zn(2+)-binding residues include C190, C198, C201, and C204.

It belongs to the QueC family. The cofactor is Zn(2+).

It carries out the reaction 7-carboxy-7-deazaguanine + NH4(+) + ATP = 7-cyano-7-deazaguanine + ADP + phosphate + H2O + H(+). It participates in purine metabolism; 7-cyano-7-deazaguanine biosynthesis. Catalyzes the ATP-dependent conversion of 7-carboxy-7-deazaguanine (CDG) to 7-cyano-7-deazaguanine (preQ(0)). The protein is 7-cyano-7-deazaguanine synthase of Campylobacter jejuni subsp. doylei (strain ATCC BAA-1458 / RM4099 / 269.97).